Here is a 149-residue protein sequence, read N- to C-terminus: Calmodulin (149 aa).

Position 2 is an N-acetylalanine (Ala-2). 4 EF-hand domains span residues 8–43, 44–79, 81–116, and 117–149; these read EQIA…LGQN, PTEA…KMKD, DSEE…LGEK, and LTDE…MTTK. The Ca(2+) site is built by Asp-21, Asp-23, Asp-25, Thr-27, Glu-32, Asp-57, Asp-59, Asn-61, Thr-63, Glu-68, Asp-94, Asp-96, Asn-98, and Glu-105. An N6,N6,N6-trimethyllysine modification is found at Lys-116. The Ca(2+) site is built by Asp-130, Asp-132, Asp-134, Gln-136, and Glu-141.

This sequence belongs to the calmodulin family. In terms of assembly, interacts (in the presence of Ca(2+)) with pde-1, madf-3, rpl-7A, tax-6, efk-1, npp-1, obr-4, sos-1, akt-1, unc-13, tag-196, ugt-48, nmy-2, F27D4.4, ddx-23, efa-6 and R11H6.4.

In terms of biological role, calmodulin mediates the control of a large number of enzymes, ion channels and other proteins by Ca(2+). Among the enzymes to be stimulated by the calmodulin-Ca(2+) complex are a number of protein kinases and phosphatases. The sequence is that of Calmodulin (cmd-1) from Caenorhabditis elegans.